The primary structure comprises 181 residues: Ribosome maturation factor RimM (181 aa).

Residues 98–172 (EDEFYFEDLI…RIVIPELSLW (75 aa)) enclose the PRC barrel domain.

It belongs to the RimM family. In terms of assembly, binds ribosomal protein uS19.

The protein resides in the cytoplasm. In terms of biological role, an accessory protein needed during the final step in the assembly of 30S ribosomal subunit, possibly for assembly of the head region. Essential for efficient processing of 16S rRNA. May be needed both before and after RbfA during the maturation of 16S rRNA. It has affinity for free ribosomal 30S subunits but not for 70S ribosomes. This Hyphomonas neptunium (strain ATCC 15444) protein is Ribosome maturation factor RimM.